The primary structure comprises 373 residues: Probable pectin lyase C (373 aa).

An N-terminal signal peptide occupies residues M1–A18. Disulfide bonds link C81/C100 and C90/C220. The N-linked (GlcNAc...) asparagine glycan is linked to N123. Residue R250 is part of the active site. Cysteines 316 and 324 form a disulfide.

This sequence belongs to the polysaccharide lyase 1 family.

The protein resides in the secreted. The catalysed reaction is Eliminative cleavage of (1-&gt;4)-alpha-D-galacturonan methyl ester to give oligosaccharides with 4-deoxy-6-O-methyl-alpha-D-galact-4-enuronosyl groups at their non-reducing ends.. Functionally, pectinolytic enzymes consist of four classes of enzymes: pectin lyase, polygalacturonase, pectin methylesterase and rhamnogalacturonase. Among pectinolytic enzymes, pectin lyase is the most important in depolymerization of pectin, since it cleaves internal glycosidic bonds of highly methylated pectins. This is Probable pectin lyase C (pelC) from Aspergillus niger (strain ATCC MYA-4892 / CBS 513.88 / FGSC A1513).